A 549-amino-acid chain; its full sequence is Glucose-6-phosphate isomerase (549 aa).

N6-acetyllysine is present on residues Lys-80, Lys-228, and Lys-234. Glu-355 (proton donor) is an active-site residue. Catalysis depends on residues His-386 and Lys-514.

Belongs to the GPI family.

The protein localises to the cytoplasm. The catalysed reaction is alpha-D-glucose 6-phosphate = beta-D-fructose 6-phosphate. It participates in carbohydrate biosynthesis; gluconeogenesis. The protein operates within carbohydrate degradation; glycolysis; D-glyceraldehyde 3-phosphate and glycerone phosphate from D-glucose: step 2/4. Functionally, catalyzes the reversible isomerization of glucose-6-phosphate to fructose-6-phosphate. The sequence is that of Glucose-6-phosphate isomerase from Shigella boydii serotype 4 (strain Sb227).